A 427-amino-acid chain; its full sequence is Phosphoribosylamine--glycine ligase (427 aa).

The 205-residue stretch at R109–E313 folds into the ATP-grasp domain. V136–T191 provides a ligand contact to ATP. 3 residues coordinate Mg(2+): Q271, E283, and N285. 3 residues coordinate Mn(2+): Q271, E283, and N285.

It belongs to the GARS family. The cofactor is Mg(2+). Mn(2+) is required as a cofactor.

The enzyme catalyses 5-phospho-beta-D-ribosylamine + glycine + ATP = N(1)-(5-phospho-beta-D-ribosyl)glycinamide + ADP + phosphate + H(+). It participates in purine metabolism; IMP biosynthesis via de novo pathway; N(1)-(5-phospho-D-ribosyl)glycinamide from 5-phospho-alpha-D-ribose 1-diphosphate: step 2/2. The protein is Phosphoribosylamine--glycine ligase of Methanoregula boonei (strain DSM 21154 / JCM 14090 / 6A8).